Here is a 376-residue protein sequence, read N- to C-terminus: RING-H2 finger protein ATL46 (376 aa).

The helical transmembrane segment at 45 to 65 (VLFVIVILAVLFFISGLLHLL) threads the bilayer. The RING-type; atypical zinc finger occupies 143–185 (CAVCLCEFSEKDKLRLLPMCSHAFHLNCIDTWLQSNSTCPLCR). 2 stretches are compositionally biased toward basic and acidic residues: residues 296–305 (RLKPQDKESE) and 358–376 (DLPK…NDGR). Disordered stretches follow at residues 296–320 (RLKP…KINT) and 341–376 (FSSD…NDGR).

The protein belongs to the RING-type zinc finger family. ATL subfamily.

The protein resides in the membrane. It catalyses the reaction S-ubiquitinyl-[E2 ubiquitin-conjugating enzyme]-L-cysteine + [acceptor protein]-L-lysine = [E2 ubiquitin-conjugating enzyme]-L-cysteine + N(6)-ubiquitinyl-[acceptor protein]-L-lysine.. Its pathway is protein modification; protein ubiquitination. The protein is RING-H2 finger protein ATL46 (ATL46) of Arabidopsis thaliana (Mouse-ear cress).